Reading from the N-terminus, the 536-residue chain is MAERDHYHTIDDPNVPCNFYDTVNLTGHTVFPNGSYDYYGTIVPAELVGTYDYIHSSLTERIEVREHVRGCVCKFKSCLNICCPWRQVFNSEVDGCIIDHSDNRTWPDPPMLNITFRNDSTILVNMFAQFAIQSFRPCPKMFSLQPETSHWDDYLLFENGSMLRVDDQQLIRKNEFCMVPTYVNESDMFYTIHPANCDMQDDNSTVKIINAYAMMFSIPFMMLTIAVYLLIPELRNQHGKSLVCYLVGLTVGYTSLCYVQLYQVDATGDACKVFGYTAYFFFMGAYMWLSVISFDLWHNFRGTRGINRFQEKKRFLFYSLYSWGIAVVFLAFTYIAQELTNLPAYLKPGIGDGVYCWLDMSNWAAMIYFYGPILVIVVANTIMFIMTAIKIHGVQREMARIIASENSTKNLRTEKDKFGLFLRLFLIMGITWLTELISYFVGSDKGWSKLFYISDLANAMQGFLIFMLFVMKKKVKHLITNRCSSVRDGSNQRQSQYSTKTTSSSVANLSLHEKPSVEKPLVISSSVDPQKTTIFR.

At 1 to 210 (MAERDHYHTI…DDNSTVKIIN (210 aa)) the chain is on the extracellular side. Intrachain disulfides connect cysteine 17–cysteine 71, cysteine 73–cysteine 78, cysteine 82–cysteine 177, cysteine 83–cysteine 96, and cysteine 138–cysteine 197. Residues asparagine 24 and asparagine 33 are each glycosylated (N-linked (GlcNAc...) asparagine). Asparagine 103, asparagine 113, asparagine 118, asparagine 159, asparagine 184, and asparagine 203 each carry an N-linked (GlcNAc...) asparagine glycan. A helical membrane pass occupies residues 211-231 (AYAMMFSIPFMMLTIAVYLLI). The Cytoplasmic portion of the chain corresponds to 232–241 (PELRNQHGKS). The chain crosses the membrane as a helical span at residues 242–262 (LVCYLVGLTVGYTSLCYVQLY). Residues 263–273 (QVDATGDACKV) lie on the Extracellular side of the membrane. Residues 274-294 (FGYTAYFFFMGAYMWLSVISF) traverse the membrane as a helical segment. Residues 295–314 (DLWHNFRGTRGINRFQEKKR) lie on the Cytoplasmic side of the membrane. The chain crosses the membrane as a helical span at residues 315 to 335 (FLFYSLYSWGIAVVFLAFTYI). At 336–365 (AQELTNLPAYLKPGIGDGVYCWLDMSNWAA) the chain is on the extracellular side. The helical transmembrane segment at 366–386 (MIYFYGPILVIVVANTIMFIM) threads the bilayer. At 387–417 (TAIKIHGVQREMARIIASENSTKNLRTEKDK) the chain is on the cytoplasmic side. The helical transmembrane segment at 418 to 438 (FGLFLRLFLIMGITWLTELIS) threads the bilayer. The Extracellular portion of the chain corresponds to 439–449 (YFVGSDKGWSK). A helical transmembrane segment spans residues 450–470 (LFYISDLANAMQGFLIFMLFV). The Cytoplasmic portion of the chain corresponds to 471-536 (MKKKVKHLIT…VDPQKTTIFR (66 aa)). The tract at residues 487 to 506 (RDGSNQRQSQYSTKTTSSSV) is disordered. Positions 492-505 (QRQSQYSTKTTSSS) are enriched in low complexity.

Belongs to the G-protein coupled receptor 2 family. Mth subfamily. In terms of assembly, homodimer.

Its subcellular location is the cell membrane. Functionally, involved in biological aging and stress response. Essential for adult survival. In Drosophila yakuba (Fruit fly), this protein is G-protein coupled receptor Mth2 (mth2).